The sequence spans 54 residues: Large ribosomal subunit protein bL32 (54 aa).

Positions 1–24 (MAVQKSKPTRSKRGMRRSHDSLKE) are disordered. Residues 7–16 (KPTRSKRGMR) are compositionally biased toward basic residues.

This sequence belongs to the bacterial ribosomal protein bL32 family.

This chain is Large ribosomal subunit protein bL32, found in Buchnera aphidicola subsp. Schizaphis graminum (strain Sg).